The primary structure comprises 765 residues: 5-methyltetrahydropteroyltriglutamate--homocysteine methyltransferase 2 (765 aa).

Positions 18 and 116 each coordinate 5-methyltetrahydropteroyltri-L-glutamate. L-homocysteine contacts are provided by residues 437–439 and glutamate 490; that span reads IGS. Residues 437–439 and glutamate 490 contribute to the L-methionine site; that span reads IGS. 5-methyltetrahydropteroyltri-L-glutamate is bound by residues aspartate 495, tyrosine 518, 521–522, and tryptophan 567; that span reads RC. Aspartate 605 serves as a coordination point for L-homocysteine. Position 605 (aspartate 605) interacts with L-methionine. Zn(2+)-binding residues include histidine 647, cysteine 649, histidine 658, aspartate 662, and glutamate 671. The active-site Proton donor is histidine 701. A Zn(2+)-binding site is contributed by cysteine 733.

Belongs to the vitamin-B12 independent methionine synthase family. Zn(2+) is required as a cofactor. Expressed in leaves, stems and siliques.

The protein localises to the cytoplasm. It localises to the cytosol. It carries out the reaction 5-methyltetrahydropteroyltri-L-glutamate + L-homocysteine = tetrahydropteroyltri-L-glutamate + L-methionine. The protein operates within amino-acid biosynthesis; L-methionine biosynthesis via de novo pathway; L-methionine from L-homocysteine (MetE route): step 1/1. Its function is as follows. Catalyzes the transfer of a methyl group from 5-methyltetrahydrofolate to homocysteine resulting in methionine formation. The protein is 5-methyltetrahydropteroyltriglutamate--homocysteine methyltransferase 2 (MS2) of Arabidopsis thaliana (Mouse-ear cress).